The chain runs to 214 residues: Small ribosomal subunit protein uS5 (214 aa).

The S5 DRBM domain maps to 54-117 (MKYEVIDIGM…RDAKMHVIPV (64 aa)).

It belongs to the universal ribosomal protein uS5 family. Part of the 30S ribosomal subunit. Contacts protein S4.

Functionally, with S4 and S12 plays an important role in translational accuracy. The chain is Small ribosomal subunit protein uS5 from Metallosphaera sedula (strain ATCC 51363 / DSM 5348 / JCM 9185 / NBRC 15509 / TH2).